A 1378-amino-acid chain; its full sequence is Macrophage-stimulating protein receptor (1378 aa).

The signal sequence occupies residues 1–23; the sequence is MGLPLPLLQSSLLLMLLLRLSAA. Topologically, residues 25 to 960 are extracellular; that stretch reads TNLNWQCPRI…RSSPGRASQR (936 aa). Positions 33 to 524 constitute a Sema domain; sequence RIPYAASRDF…SGDQVFKVPI (492 aa). Asparagine 91 carries an N-linked (GlcNAc...) asparagine glycan. Cystine bridges form between cysteine 102–cysteine 105, cysteine 108–cysteine 163, cysteine 136–cysteine 144, cysteine 175–cysteine 178, cysteine 301–cysteine 368, cysteine 386–cysteine 409, and cysteine 387–cysteine 424. 3 N-linked (GlcNAc...) asparagine glycosylation sites follow: asparagine 391, asparagine 460, and asparagine 490. Cystine bridges form between cysteine 529-cysteine 547, cysteine 535-cysteine 569, cysteine 538-cysteine 554, and cysteine 550-cysteine 560. IPT/TIG domains lie at 571–673, 686–769, and 772–864; these read PEIS…FRVE, PVLT…FHYK, and PIVL…FRFL. N-linked (GlcNAc...) asparagine glycans are attached at residues asparagine 656, asparagine 722, asparagine 845, and asparagine 901. A helical membrane pass occupies residues 961-981; that stretch reads ILLIALLVLILLVAVLAVALI. At 982 to 1378 the chain is on the cytoplasmic side; sequence FNSRRRKKQL…RPLSEPPLPT (397 aa). Residues 1002–1026 form a disordered region; it reads SDINDTASGAPNHEESSESRDGTSV. Residues 1013-1022 show a composition bias toward basic and acidic residues; sequence NHEESSESRD. Residues 1059–1322 enclose the Protein kinase domain; the sequence is IHTDQVIGKG…ALVLEVKQVV (264 aa). Residues 1065–1073, lysine 1091, and 1138–1141 contribute to the ATP site; these read IGKGHFGVV and LPYM. The Proton acceptor role is filled by aspartate 1185. Arginine 1189 is a binding site for ATP. Residues tyrosine 1215, tyrosine 1216, tyrosine 1330, and tyrosine 1337 each carry the phosphotyrosine; by autocatalysis modification. Residues 1347–1378 form a disordered region; it reads DGSVPPEQVQPSPQHCRSTSKPRPLSEPPLPT. The segment covering 1349–1360 has biased composition (low complexity); it reads SVPPEQVQPSPQ.

The protein belongs to the protein kinase superfamily. Tyr protein kinase family. In terms of assembly, heterodimer of an alpha chain and a beta chain which are disulfide linked. Binds PLXNB1. Associates with and is negatively regulated by HYAL2. Interacts when phosphorylated with downstream effectors including PIK3R1, PCLG1, GRB2 and GAB1. Interacts with integrin beta1/ITGB1 in a ligand-independent fashion. Isoform sf-Stk forms covalent heterodimers with friend spleen focus-forming virus (FSFFV) gp55. Proteolytic processing yields the two subunits. In terms of processing, autophosphorylated in response to ligand binding on Tyr-1215 and Tyr-1216 in the kinase domain leading to further phosphorylation of Tyr-1330 and Tyr-1337 in the C-terminal multifunctional docking site. Post-translationally, ubiquitinated. Ubiquitination by CBL regulates the receptor stability and activity through proteasomal degradation. O-mannosylation of IPT/TIG domains on Thr or Ser residues by TMEM260 is required for protein maturation. O-mannosylated residues are composed of single mannose glycans that are not elongated or modified. As to expression, expressed in liver, skin, lung, brain, testis and kidney.

It localises to the membrane. It carries out the reaction L-tyrosyl-[protein] + ATP = O-phospho-L-tyrosyl-[protein] + ADP + H(+). Its activity is regulated as follows. In its inactive state, the C-terminal tail interacts with the catalytic domain and inhibits the kinase activity. Upon ligand binding, the C-terminal tail is displaced and becomes phosphorylated, thus increasing the kinase activity. Its function is as follows. Receptor tyrosine kinase that transduces signals from the extracellular matrix into the cytoplasm by binding to MST1 ligand. Regulates many physiological processes including cell survival, migration and differentiation. Ligand binding at the cell surface induces autophosphorylation of RON on its intracellular domain that provides docking sites for downstream signaling molecules. Following activation by ligand, interacts with the PI3-kinase subunit PIK3R1, PLCG1 or the adapter GAB1. Recruitment of these downstream effectors by RON leads to the activation of several signaling cascades including the RAS-ERK, PI3 kinase-AKT, or PLCgamma-PKC. RON signaling activates the wound healing response by promoting epithelial cell migration, proliferation as well as survival at the wound site. Also plays a role in the innate immune response by regulating the migration and phagocytic activity of macrophages. Alternatively, RON can also promote signals such as cell migration and proliferation in response to growth factors other than MST1 ligand. In Mus musculus (Mouse), this protein is Macrophage-stimulating protein receptor (Mst1r).